We begin with the raw amino-acid sequence, 80 residues long: Polcalcin Cyn d 7 (80 aa).

EF-hand domains are found at residues alanine 2–threonine 37 and aspartate 40–leucine 72. The Ca(2+) site is built by aspartate 15, asparagine 17, aspartate 19, lysine 21, glutamate 26, aspartate 50, aspartate 52, aspartate 54, and glutamate 61.

This is Polcalcin Cyn d 7 from Cynodon dactylon (Bermuda grass).